Consider the following 120-residue polypeptide: Ribonuclease P protein component (120 aa).

It belongs to the RnpA family. In terms of assembly, consists of a catalytic RNA component (M1 or rnpB) and a protein subunit.

It catalyses the reaction Endonucleolytic cleavage of RNA, removing 5'-extranucleotides from tRNA precursor.. Functionally, RNaseP catalyzes the removal of the 5'-leader sequence from pre-tRNA to produce the mature 5'-terminus. It can also cleave other RNA substrates such as 4.5S RNA. The protein component plays an auxiliary but essential role in vivo by binding to the 5'-leader sequence and broadening the substrate specificity of the ribozyme. The polypeptide is Ribonuclease P protein component (Mycobacterium leprae (strain Br4923)).